The following is an 874-amino-acid chain: Leucine--tRNA ligase (874 aa).

The 'HIGH' region signature appears at 43–53; it reads PYPSGRIHIGH. Residues 614–634 are disordered; sequence LDDGSPVTVGPPEKMSKSKKN. The 'KMSKS' region motif lies at 627–631; the sequence is KMSKS. Lysine 630 is a binding site for ATP.

Belongs to the class-I aminoacyl-tRNA synthetase family.

It is found in the cytoplasm. It catalyses the reaction tRNA(Leu) + L-leucine + ATP = L-leucyl-tRNA(Leu) + AMP + diphosphate. In Azorhizobium caulinodans (strain ATCC 43989 / DSM 5975 / JCM 20966 / LMG 6465 / NBRC 14845 / NCIMB 13405 / ORS 571), this protein is Leucine--tRNA ligase.